Here is a 68-residue protein sequence, read N- to C-terminus: Large ribosomal subunit protein uL30 (68 aa).

It belongs to the universal ribosomal protein uL30 family. As to quaternary structure, part of the 50S ribosomal subunit.

This Agrobacterium fabrum (strain C58 / ATCC 33970) (Agrobacterium tumefaciens (strain C58)) protein is Large ribosomal subunit protein uL30.